Consider the following 197-residue polypeptide: Holliday junction branch migration complex subunit RuvA (197 aa).

Residues 1-63 (MFDYIKGQLT…EDAHLLFGFH (63 aa)) form a domain I region. A domain II region spans residues 64–142 (TENEKDVFLK…TIPEGGQAQQ (79 aa)). Residues 142 to 146 (QMPKA) are flexible linker. The interval 147–197 (KGNQQLDEAIEALLALGYKATELKKIRAFFEGTDDTAEQYIKSALKMLMKG) is domain III.

It belongs to the RuvA family. In terms of assembly, homotetramer. Forms an RuvA(8)-RuvB(12)-Holliday junction (HJ) complex. HJ DNA is sandwiched between 2 RuvA tetramers; dsDNA enters through RuvA and exits via RuvB. An RuvB hexamer assembles on each DNA strand where it exits the tetramer. Each RuvB hexamer is contacted by two RuvA subunits (via domain III) on 2 adjacent RuvB subunits; this complex drives branch migration. In the full resolvosome a probable DNA-RuvA(4)-RuvB(12)-RuvC(2) complex forms which resolves the HJ.

Its subcellular location is the cytoplasm. Functionally, the RuvA-RuvB-RuvC complex processes Holliday junction (HJ) DNA during genetic recombination and DNA repair, while the RuvA-RuvB complex plays an important role in the rescue of blocked DNA replication forks via replication fork reversal (RFR). RuvA specifically binds to HJ cruciform DNA, conferring on it an open structure. The RuvB hexamer acts as an ATP-dependent pump, pulling dsDNA into and through the RuvAB complex. HJ branch migration allows RuvC to scan DNA until it finds its consensus sequence, where it cleaves and resolves the cruciform DNA. This is Holliday junction branch migration complex subunit RuvA from Streptococcus uberis (strain ATCC BAA-854 / 0140J).